The chain runs to 274 residues: 3-methyl-2-oxobutanoate hydroxymethyltransferase (274 aa).

Residues D49 and D88 each coordinate Mg(2+). Residues D49 to S50, D88, and K118 each bind 3-methyl-2-oxobutanoate. A Mg(2+)-binding site is contributed by E120. Catalysis depends on E187, which acts as the Proton acceptor.

The protein belongs to the PanB family. Homodecamer; pentamer of dimers. Mg(2+) is required as a cofactor.

Its subcellular location is the cytoplasm. It carries out the reaction 3-methyl-2-oxobutanoate + (6R)-5,10-methylene-5,6,7,8-tetrahydrofolate + H2O = 2-dehydropantoate + (6S)-5,6,7,8-tetrahydrofolate. It functions in the pathway cofactor biosynthesis; (R)-pantothenate biosynthesis; (R)-pantoate from 3-methyl-2-oxobutanoate: step 1/2. Catalyzes the reversible reaction in which hydroxymethyl group from 5,10-methylenetetrahydrofolate is transferred onto alpha-ketoisovalerate to form ketopantoate. The protein is 3-methyl-2-oxobutanoate hydroxymethyltransferase of Rhodopseudomonas palustris (strain ATCC BAA-98 / CGA009).